The chain runs to 254 residues: uncharacterized protein (254 aa).

Positions 163-182 (PNKHTQHKRSTRRTSPKDYN) are disordered. Basic residues predominate over residues 166–176 (HTQHKRSTRRT). Residues 207–227 (AHSAWILIIIIIIIVVILFFF) form a helical membrane-spanning segment.

Belongs to the RL11 family.

It is found in the host membrane. This is an uncharacterized protein from Human cytomegalovirus (strain Merlin) (HHV-5).